The chain runs to 871 residues: Pentatricopeptide repeat-containing protein DOT4, chloroplastic (871 aa).

The transit peptide at 1 to 28 (MAMLVTNLSSSSFCFFSSPHLQNQKEIR) directs the protein to the chloroplast. PPR repeat units lie at residues 60 to 94 (SVTD…DIDP), 96 to 127 (TLCS…GFVI), 128 to 158 (DSNL…VKIE), 159 to 193 (KALF…GVEM), 194 to 228 (DSYT…GFGE), 229 to 259 (RNSV…MTER), 260 to 294 (DVIS…GIEI), 295 to 329 (DLAT…CFSR), 330 to 360 (EDRF…MSDR), 361 to 395 (SVVS…GISP), 396 to 430 (DVYT…DLGF), 431 to 465 (DIFV…DIIS), 466 to 497 (WNTI…RFSP), 498 to 532 (DERT…GYFS), 533 to 563 (DRHV…IASK), 564 to 598 (DLVS…GIEA), 599 to 629 (DEIS…MRHE), and 635 to 665 (TVEH…MPIP). Residues 670–745 (IWGALLCGCR…NPGCSWIEIK (76 aa)) are type E motif. The segment at 746-776 (GRVNIFVAGDSSNPETENIEAFLRKVRARMI) is type E(+) motif. A type DYW motif region spans residues 777–871 (EEGYSPLTKY…DGHCSCRGFW (95 aa)).

It belongs to the PPR family. PCMP-H subfamily. Zn(2+) serves as cofactor. As to expression, weakly expressed in leaves.

It is found in the plastid. Its subcellular location is the chloroplast. Plays a major role in single RNA editing events in chloroplasts. Acts as a site-recognition transacting factor involved in the edition of the unique site (corresponding to cytidine-488) of rpoC1, which is a plastid-encoded subunit of the chloroplast DNA-directed RNA polymerase. May provide the catalytic activity for editing site conversion. Involved in leaf vasculature patterning. The sequence is that of Pentatricopeptide repeat-containing protein DOT4, chloroplastic from Arabidopsis thaliana (Mouse-ear cress).